Reading from the N-terminus, the 1107-residue chain is MGKTIQVFGFPNGVSAEEVKKFLERLTGSGTVYAIKVRQPKKGGPRVYAIVQFTSERHTRLIITAAAERLYYGRSYLKAFEVEQDIVPKPRASLHTISGLKMFFGCQVSTKKFLTLWSAQDVCVSFGIGMRKLHFSFSWYQKDYRLELSYENIWQIDLHSPQGRSSKFLVIQVIGAPKIFEKEDQPINLLFGIMDFYSDGSDEQWIRTTDFTSSSCIGQSTAFCLELPVHLNVPDFRENFANYAEHRASSFLIESGSSYSSNANTLVPVVDPPPGFSLPFEILFKLNTLVQNACLSGPALDLDFYRLLNQKKYDRALIDHCLEKLFHLGECCYEPAHWLRDEYKKWISKGKLPLSPTISLDDGLVYMYRVQVTPARVYFSGPEVNVSNRVLRHYSKYINNFLRVSFVDEDLEKVRSMDLSPRSSTQRRTKLYDRIYSVLRDGIVIGDKKFEFLAFSSSQLRENSAWMFAPIDRITAAHIRAWMGDFDHIRNVAKYAARLGQSFSSSRETLNVRSDEIEVIPDVEIISLGTRYVFSDGIGKISAEFARKVARKCGLTEFSPSAFQIRYGGYKGVVAVDPNSSKKLSLRKSMSKFESENTKLDVLAWSKYQPCYMNRQLITLLSTLGVTDSVFEKKQREVVDRLDAILTHPLEAHEALGLMAPGENTNILKALILCGYKPDAEPFLSMMLQNFRASKLLELRTKTRIFISGGRSMMGCLDETRTLEYGQVVVQYSDPMRPGRRFIITGPVVVAKNPCLHPGDVRVLQAVNVPALNHMVDCVVFPQKGLRPHPNECSGSDLDGDIYFVCWDQELVPPRTSEPMDYTPEPTQILDHDVTIEEVEEYFANYIVNDSLGIIANAHTAFADKEPLKAFSDPCIELAKKFSTAVDFPKTGVAAVIPQHLYVKEYPDFMEKPDKPTYESKNVIGKLFREVKERAPPLISIKSFTLDVASKSYDKDMEVDGFEEYVDEAFYQKANYDFKLGNLMDYYGIKTEAEILSGGIMRMSKSFTKRRDAESIGRAVRALRKETLSLFNASEEEENESAKASAWYHVTYHSSYWGLYNEGLNRDHFLSFAWCVYDKLVRIKKTNLGRRQRQETLERLDHVLRFG.

The protein belongs to the RdRP family.

The enzyme catalyses RNA(n) + a ribonucleoside 5'-triphosphate = RNA(n+1) + diphosphate. Its function is as follows. RNA-dependent direct polymerase involved in antiviral silencing. Required for the production of some small RNAs (mainly 21 and some 22 nucleotides) derived from the crucifer-infecting tobamovirus (TMV-cg). Required for turnip mosaic virus (TuMV) silencing and accumulation of viral siRNAs. Involved in cucumber mosaic virus (CMV) silencing. Required for the biogenesis of viral secondary siRNAs, process that follows the production of primary siRNAs derived from viral RNA replication. Specifically targets the positive-strand of the 3 RNA genomes of CMV and preferentially amplifies the 5'-terminal siRNAs of each viral genomic RNA. Not involved in the production of siRNAs derived from a single-stranded 336-nucleotide satellite RNA of CMV. The polypeptide is RNA-dependent RNA polymerase 1 (RDR1) (Arabidopsis thaliana (Mouse-ear cress)).